Here is a 290-residue protein sequence, read N- to C-terminus: Shikimate dehydrogenase (NADP(+)) (290 aa).

Residues 18–20 (SYS) and Thr66 each bind shikimate. Residue Lys70 is the Proton acceptor of the active site. Residues Asn91 and Asp106 each contribute to the shikimate site. Residues 130–134 (GNGGA) and Met230 each bind NADP(+). Residue Tyr232 participates in shikimate binding. Gly253 is a binding site for NADP(+).

Belongs to the shikimate dehydrogenase family. In terms of assembly, homodimer.

The catalysed reaction is shikimate + NADP(+) = 3-dehydroshikimate + NADPH + H(+). The protein operates within metabolic intermediate biosynthesis; chorismate biosynthesis; chorismate from D-erythrose 4-phosphate and phosphoenolpyruvate: step 4/7. Functionally, involved in the biosynthesis of the chorismate, which leads to the biosynthesis of aromatic amino acids. Catalyzes the reversible NADPH linked reduction of 3-dehydroshikimate (DHSA) to yield shikimate (SA). The sequence is that of Shikimate dehydrogenase (NADP(+)) from Prosthecochloris aestuarii (strain DSM 271 / SK 413).